The sequence spans 380 residues: Deoxyguanosinetriphosphate triphosphohydrolase-like protein (380 aa).

The HD domain occupies 79 to 196; sequence RLTHTLEVQQ…VDAADALAYT (118 aa).

It belongs to the dGTPase family. Type 2 subfamily.

This is Deoxyguanosinetriphosphate triphosphohydrolase-like protein from Deinococcus deserti (strain DSM 17065 / CIP 109153 / LMG 22923 / VCD115).